We begin with the raw amino-acid sequence, 301 residues long: tRNA pseudouridine synthase B (301 aa).

Aspartate 38 serves as the catalytic Nucleophile.

It belongs to the pseudouridine synthase TruB family. Type 1 subfamily.

It carries out the reaction uridine(55) in tRNA = pseudouridine(55) in tRNA. Responsible for synthesis of pseudouridine from uracil-55 in the psi GC loop of transfer RNAs. In Lacticaseibacillus paracasei (strain ATCC 334 / BCRC 17002 / CCUG 31169 / CIP 107868 / KCTC 3260 / NRRL B-441) (Lactobacillus paracasei), this protein is tRNA pseudouridine synthase B.